A 299-amino-acid chain; its full sequence is tRNA dimethylallyltransferase (299 aa).

13–20 is a binding site for ATP; it reads GPTASGKT. A substrate-binding site is contributed by 15–20; sequence TASGKT. The tract at residues 38–41 is interaction with substrate tRNA; sequence DSRQ.

The protein belongs to the IPP transferase family. Monomer. It depends on Mg(2+) as a cofactor.

It carries out the reaction adenosine(37) in tRNA + dimethylallyl diphosphate = N(6)-dimethylallyladenosine(37) in tRNA + diphosphate. Its function is as follows. Catalyzes the transfer of a dimethylallyl group onto the adenine at position 37 in tRNAs that read codons beginning with uridine, leading to the formation of N6-(dimethylallyl)adenosine (i(6)A). The sequence is that of tRNA dimethylallyltransferase from Prochlorococcus marinus (strain MIT 9211).